Here is a 244-residue protein sequence, read N- to C-terminus: Carbonyl reductase [NADPH] 2 (244 aa).

11–39 provides a ligand contact to NADP(+); it reads LVTGAGKGIGRDTVKALHASGAKVVAVTR. Serine 42 is modified (phosphoserine). Serine 136 serves as a coordination point for substrate. The active-site Proton acceptor is the tyrosine 149. The residue at position 176 (serine 176) is a Phosphoserine.

It belongs to the short-chain dehydrogenases/reductases (SDR) family. In terms of assembly, homotetramer. In terms of tissue distribution, predominantly expressed in lung, in ciliated cells, non-ciliated bronchiolar cells and type-II alveolar pneumocytes. Also detected in adipose tissue (at protein level). Low expression in testis, heart, kidney, spleen, brain and liver.

The protein localises to the mitochondrion matrix. The catalysed reaction is a secondary alcohol + NADP(+) = a ketone + NADPH + H(+). In terms of biological role, may function in the pulmonary metabolism of endogenous carbonyl compounds, such as aliphatic aldehydes and ketones derived from lipid peroxidation, 3-ketosteroids and fatty aldehydes, as well as in xenobiotic metabolism. The chain is Carbonyl reductase [NADPH] 2 (Cbr2) from Mus musculus (Mouse).